Consider the following 481-residue polypeptide: Cobyric acid synthase (481 aa).

The 188-residue stretch at 248-435 folds into the GATase cobBQ-type domain; sequence NTVIAVPMLP…LHGLFHGGAF (188 aa). Residue cysteine 329 is the Nucleophile of the active site. Histidine 427 is a catalytic residue.

The protein belongs to the CobB/CobQ family. CobQ subfamily.

It participates in cofactor biosynthesis; adenosylcobalamin biosynthesis. In terms of biological role, catalyzes amidations at positions B, D, E, and G on adenosylcobyrinic A,C-diamide. NH(2) groups are provided by glutamine, and one molecule of ATP is hydrogenolyzed for each amidation. The chain is Cobyric acid synthase from Granulibacter bethesdensis (strain ATCC BAA-1260 / CGDNIH1).